The following is a 128-amino-acid chain: Gas vesicle protein O (128 aa).

The interval 1–49 is disordered; sequence MANTPEDTQNTQNDSQNDSQNDSQKDTSARATSARAHQQPQEQPPSPMR. Low complexity predominate over residues 7–22; it reads DTQNTQNDSQNDSQND. Residues 29 to 41 are compositionally biased toward polar residues; the sequence is ARATSARAHQQPQ.

Belongs to the gas vesicle GvpO family.

It localises to the gas vesicle. In terms of biological role, a minor component of the gas vesicle. May play a role in transcription and/or RNA stability and in GV assembly. Gas vesicles are hollow, gas filled proteinaceous nanostructures found in some microorganisms. It is not clear what function gas vesicles perform in soil bacteria. The sequence is that of Gas vesicle protein O from Streptomyces sp. (strain CB03234).